The primary structure comprises 425 residues: Cell adhesion molecule CEACAM16 (425 aa).

Residues 1 to 20 form the signal peptide; sequence MALTGYSWLLLSATFLNVGA. Asn-36 carries an N-linked (GlcNAc...) asparagine glycan. 2 consecutive Ig-like C2-type domains span residues 133–218 and 223–309; these read PTVL…INLT and PERV…ASVV. An intrachain disulfide couples Cys-153 to Cys-201. N-linked (GlcNAc...) asparagine glycosylation occurs at Asn-216. Cys-252 and Cys-293 are disulfide-bonded. Asn-394 carries an N-linked (GlcNAc...) asparagine glycan.

The protein belongs to the immunoglobulin superfamily. CEA family. Homooligomer; can for homodimers and homotetramers. Interacts with TECTA and TECTB.

The protein localises to the secreted. Required for proper hearing, plays a role in maintaining the integrity of the tectorial membrane. In Homo sapiens (Human), this protein is Cell adhesion molecule CEACAM16.